A 353-amino-acid chain; its full sequence is B1 bradykinin receptor (353 aa).

Over 1-41 (MASQTLVVFQASNQSQLPPPNATLCDGAQEAWHLLHKVLPT) the chain is Extracellular. N13 and N21 each carry an N-linked (GlcNAc...) asparagine glycan. Residues 42–62 (CVVAICSGGLLGNLFVLSVFL) traverse the membrane as a helical segment. Residues 63 to 72 (VPRRRLNAAE) are Cytoplasmic-facing. Residues 73–93 (IYLAHLAASDLVFALGLPFWA) form a helical membrane-spanning segment. At 94–110 (ETIRNGFHWPFGAPLCR) the chain is on the extracellular side. C109 and C189 are joined by a disulfide. A helical transmembrane segment spans residues 111–131 (VVNGVIKANLFISIFLVVAIS). Over 132–154 (RDRYRALVHPVASWRRRRRRHWA) the chain is Cytoplasmic. A helical membrane pass occupies residues 155–175 (QATCVLIWTAGGLLSIPTFLL). The Extracellular segment spans residues 176–207 (RSVQVVPELNVSACVLPFPHEAWAFVRTVELN). N185 carries N-linked (GlcNAc...) asparagine glycosylation. The helical transmembrane segment at 208 to 228 (VLGFLLPLAAILFFNYHILAA) threads the bilayer. Residues 229-251 (LRGREQLSRTRCGGPRDGKTTAL) lie on the Cytoplasmic side of the membrane. A helical transmembrane segment spans residues 252 to 272 (ILTLVAVFLLCWTPYHVCAFL). Over 273-295 (EFLLHVRAIRGCFWEDFTDLGLQ) the chain is Extracellular. Residues 296 to 316 (YTNFFAFINSCLNPVIYVFWG) traverse the membrane as a helical segment. At 317 to 353 (QLFRTKIWELYHRCLPRKLTAVSSSRRKEIFQIFWRN) the chain is on the cytoplasmic side. C330 is lipidated: S-palmitoyl cysteine.

This sequence belongs to the G-protein coupled receptor 1 family. Bradykinin receptor subfamily. BDKRB1 sub-subfamily.

It is found in the cell membrane. Its function is as follows. This is a receptor for bradykinin. Could be a factor in chronic pain and inflammation. This is B1 bradykinin receptor (BDKRB1) from Sus scrofa (Pig).